Here is a 274-residue protein sequence, read N- to C-terminus: Type II restriction enzyme HgiEI (274 aa).

This sequence belongs to the TdeIII type II restriction endonuclease family.

It catalyses the reaction Endonucleolytic cleavage of DNA to give specific double-stranded fragments with terminal 5'-phosphates.. A P subtype restriction enzyme that recognizes the double-stranded sequence 5'-GGWCC-3' and cleaves after G-1. This system is more active than isoschizomeric RM.HgiBI. This is Type II restriction enzyme HgiEI from Herpetosiphon aurantiacus (Herpetosiphon giganteus).